We begin with the raw amino-acid sequence, 856 residues long: DNA mismatch repair protein MutS (856 aa).

Glycine 607–serine 614 is an ATP binding site.

This sequence belongs to the DNA mismatch repair MutS family.

Functionally, this protein is involved in the repair of mismatches in DNA. It is possible that it carries out the mismatch recognition step. This protein has a weak ATPase activity. This chain is DNA mismatch repair protein MutS, found in Cytophaga hutchinsonii (strain ATCC 33406 / DSM 1761 / CIP 103989 / NBRC 15051 / NCIMB 9469 / D465).